Here is a 279-residue protein sequence, read N- to C-terminus: Shikimate dehydrogenase (NADP(+)) (279 aa).

Residues S14–S16 and T62 each bind shikimate. K66 acts as the Proton acceptor in catalysis. The shikimate site is built by N87 and D103. NADP(+) contacts are provided by residues G127–A131, N151–K156, and M215. Y217 lines the shikimate pocket. G239 lines the NADP(+) pocket.

It belongs to the shikimate dehydrogenase family. In terms of assembly, homodimer.

It carries out the reaction shikimate + NADP(+) = 3-dehydroshikimate + NADPH + H(+). It functions in the pathway metabolic intermediate biosynthesis; chorismate biosynthesis; chorismate from D-erythrose 4-phosphate and phosphoenolpyruvate: step 4/7. In terms of biological role, involved in the biosynthesis of the chorismate, which leads to the biosynthesis of aromatic amino acids. Catalyzes the reversible NADPH linked reduction of 3-dehydroshikimate (DHSA) to yield shikimate (SA). The sequence is that of Shikimate dehydrogenase (NADP(+)) from Alteromonas mediterranea (strain DSM 17117 / CIP 110805 / LMG 28347 / Deep ecotype).